Consider the following 157-residue polypeptide: Small ribosomal subunit protein uS7 (157 aa).

Belongs to the universal ribosomal protein uS7 family. As to quaternary structure, part of the 30S ribosomal subunit. Contacts proteins S9 and S11.

One of the primary rRNA binding proteins, it binds directly to 16S rRNA where it nucleates assembly of the head domain of the 30S subunit. Is located at the subunit interface close to the decoding center, probably blocks exit of the E-site tRNA. This is Small ribosomal subunit protein uS7 from Leptospira interrogans serogroup Icterohaemorrhagiae serovar copenhageni (strain Fiocruz L1-130).